A 470-amino-acid polypeptide reads, in one-letter code: Probable citrate synthase, mitochondrial (470 aa).

Active-site residues include His297, His351, and Asp406.

This sequence belongs to the citrate synthase family. In terms of assembly, homodimer.

The protein localises to the mitochondrion matrix. It catalyses the reaction oxaloacetate + acetyl-CoA + H2O = citrate + CoA + H(+). The protein operates within carbohydrate metabolism; tricarboxylic acid cycle; isocitrate from oxaloacetate: step 1/2. In Leishmania braziliensis, this protein is Probable citrate synthase, mitochondrial.